The sequence spans 209 residues: Large ribosomal subunit protein uL4 (209 aa).

A disordered region spans residues 45 to 78 (RQGTHKAKERAEVAGSTRKIKKQKGTGTARAGSA).

It belongs to the universal ribosomal protein uL4 family. As to quaternary structure, part of the 50S ribosomal subunit.

Functionally, one of the primary rRNA binding proteins, this protein initially binds near the 5'-end of the 23S rRNA. It is important during the early stages of 50S assembly. It makes multiple contacts with different domains of the 23S rRNA in the assembled 50S subunit and ribosome. Forms part of the polypeptide exit tunnel. The protein is Large ribosomal subunit protein uL4 of Flavobacterium psychrophilum (strain ATCC 49511 / DSM 21280 / CIP 103535 / JIP02/86).